We begin with the raw amino-acid sequence, 1033 residues long: MPKKALDSRIPTLIKNGCQEKQRSFFVVVGDRARDQVVNLHWLLSQSKVAARPNVLWMYKKDLLGFTSHRKKRENKIKKEIKRGIRDPNSEDPFELFCSITNIRYCYYKESEKILGQTYGMLVLQDFEALTPNLLARTIETVEGGGIVVLLLHKLNSLKQLYTMSMDIHSRYRTEAHSDVTARFNERFILSLGNCENCLVIDDELNVLPISGGKNVKALPPTLEEDNSTQNSIKELQESLGEDHPAGALVGVTKTLDQARAVLTFVESIVEKSLKGTVSLTAGRGRGKSAALGLAIAAAIAHGYSNIFITSPSPENLKTLFEFIFKGFDALNYEEHVDYDIIQSTNPAYHNAIVRVNIFRDHRQTIQYISPEDSNVLGQAELVVIDEAAAIPLPLVRKLIGPYLVFMASTINGYEGTGRSLSLKLLQQLREQSRIYSGSGNNKSDSQSHISGRTLKEISLDEPIRYAMGDRIELWLNKLLCLDAASYVSRMATQGFPHPSECSLYRVSRDTLFSYHPISEAFLQRMMSLYVASHYKNSPNDLQLMSDAPAHQLFVLLPPVDLKNPKLPDPICVIQLALEGSISRESIMNSLSRGQRAGGDLIPWLISQQFQDENFAALGGARIVRIAVSPEHVKMGYGTRAMQLLHEYFEGKFISASEEFKAVKHSLKRIGDEEIENTALQTEKIHVRDAKTMPPLLLKLSELQPEPLHYVGVSYGLTPSLQKFWKREGYCPLYLRQTANDLTGEHTCVMLRVLEGRDSEWLGAFAQNFYRRFLSLLGYQFREFAAITALSVLDACNNGTKYVVNSTSKLTNEEINNVFESYDLKRLESYSNNLLDYHVIVDLLPKLAHLYFSGKFPDSVKLSPVQQSVLLALGLQYKTIDTLEKEFNLPSNQLLAMLVKLSKKIMKCIDEIETKDIEEELGSNKKTESSNSKLPEFTPLQQSLEEELQEGADEAMLALREKQRELINAIDLEKYAIRGNEEDWKAAENQIQKTNGKGARVVSIKGEKRKNNSLDASDKKTKEKPSSKKKFRK.

ATP-binding positions include 285-294 (GRGKSAALGL) and R465. The N-acetyltransferase domain occupies 560 to 694 (VDLKNPKLPD…IHVRDAKTMP (135 aa)). Acetyl-CoA is bound by residues 626–628 (IAV), 633–639 (VKMGYGT), and R727. A disordered region spans residues 988-1033 (ENQIQKTNGKGARVVSIKGEKRKNNSLDASDKKTKEKPSSKKKFRK). A compositionally biased stretch (basic and acidic residues) spans 1005–1026 (KGEKRKNNSLDASDKKTKEKPS).

It belongs to the RNA cytidine acetyltransferase family. NAT10 subfamily. As to quaternary structure, interacts with tan1.

It localises to the nucleus. It is found in the nucleolus. The enzyme catalyses a cytidine in 18S rRNA + acetyl-CoA + ATP + H2O = an N(4)-acetylcytidine in 18S rRNA + ADP + phosphate + CoA + H(+). It catalyses the reaction a cytidine in tRNA + acetyl-CoA + ATP + H2O = an N(4)-acetylcytidine in tRNA + ADP + phosphate + CoA + H(+). RNA cytidine acetyltransferase with specificity toward both 18S rRNA and tRNAs. Catalyzes the formation of N(4)-acetylcytidine (ac4C) at positions 1297 and 1815 in 18S rRNA. Required for early nucleolar cleavages of precursor rRNA at sites A0, A1 and A2 during 18S rRNA synthesis. Catalyzes the formation of ac4C in serine and leucine tRNAs. Requires the tRNA-binding adapter protein tan1 for full tRNA acetyltransferase activity but not for 18S rRNA acetylation. The sequence is that of RNA cytidine acetyltransferase from Schizosaccharomyces pombe (strain 972 / ATCC 24843) (Fission yeast).